The following is a 301-amino-acid chain: Mating type protein mtA-1 (301 aa).

The segment at residues 49-104 (APKKKVNGFMGFRSYYSSLFSQFPQKARSPFMTILWQHDPFHNEWDFMCSVYSSIR) is a DNA-binding region (alpha box).

Belongs to the MATALPHA1 family.

Its subcellular location is the nucleus. Mating type proteins are sequence specific DNA-binding proteins that act as master switches in fungal differentiation by controlling gene expression in a cell type-specific fashion. Transcriptional activator that induces the transcription of alpha-specific genes. In Sordaria fimicola, this protein is Mating type protein mtA-1 (MTA1).